Here is a 323-residue protein sequence, read N- to C-terminus: Phosphate acetyltransferase (323 aa).

Belongs to the phosphate acetyltransferase and butyryltransferase family.

Its subcellular location is the cytoplasm. The catalysed reaction is acetyl-CoA + phosphate = acetyl phosphate + CoA. It functions in the pathway metabolic intermediate biosynthesis; acetyl-CoA biosynthesis; acetyl-CoA from acetate: step 2/2. The sequence is that of Phosphate acetyltransferase (pta) from Bacillus subtilis (strain 168).